Here is a 241-residue protein sequence, read N- to C-terminus: Uridylate kinase (241 aa).

15-18 (KLSG) provides a ligand contact to ATP. The tract at residues 23–28 (GTEGFG) is involved in allosteric activation by GTP. Gly57 serves as a coordination point for UMP. ATP is bound by residues Gly58 and Arg62. UMP-binding positions include Asp77 and 138–145 (TGNPFFTT). Residues Thr165, Phe171, and Asp174 each contribute to the ATP site.

It belongs to the UMP kinase family. As to quaternary structure, homohexamer.

It localises to the cytoplasm. It carries out the reaction UMP + ATP = UDP + ADP. It functions in the pathway pyrimidine metabolism; CTP biosynthesis via de novo pathway; UDP from UMP (UMPK route): step 1/1. Its activity is regulated as follows. Allosterically activated by GTP. Inhibited by UTP. In terms of biological role, catalyzes the reversible phosphorylation of UMP to UDP. In Escherichia coli O139:H28 (strain E24377A / ETEC), this protein is Uridylate kinase.